The sequence spans 369 residues: Protein HGH1 homolog (369 aa).

It belongs to the HGH1 family.

The protein is Protein HGH1 homolog of Drosophila melanogaster (Fruit fly).